Consider the following 798-residue polypeptide: Tripartite terminase subunit 1 (798 aa).

Residues 191 to 219 (CFQCYEELMAVPNQGRSINRRMQGLLCDH) form a C3H1-type zinc finger. Over residues 416 to 429 (AAGAARSRAEAASG) the composition is skewed to low complexity. The segment at 416–458 (AAGAARSRAEAASGAGAGGEEGAGAAAGRGNTGGDEGAGTTTA) is disordered. Residues 430–452 (AGAGGEEGAGAAAGRGNTGGDEG) show a composition bias toward gly residues. 674 to 681 (YNETFGKQ) is a binding site for ATP.

It belongs to the herpesviridae TRM1 protein family. In terms of assembly, associates with TRM2 and TRM3 to form the tripartite terminase complex. Interacts with portal protein.

It is found in the host nucleus. Its function is as follows. Component of the molecular motor that translocates viral genomic DNA in empty capsid during DNA packaging. Forms a tripartite terminase complex together with TRM2 and TRM3 in the host cytoplasm. Once the complex reaches the host nucleus, it interacts with the capsid portal vertex. This portal forms a ring in which genomic DNA is translocated into the capsid. TRM1 carries an endonuclease activity that plays an important role for the cleavage of concatemeric viral DNA into unit length genomes. This is Tripartite terminase subunit 1 from Murid herpesvirus 1 (strain Smith) (MuHV-1).